Consider the following 338-residue polypeptide: Isopenicillin N synthase (338 aa).

Isopenicillin N contacts are provided by Arg-89, Tyr-93, Ser-185, and Tyr-191. Arg-89, Tyr-93, Ser-185, Tyr-191, His-216, and Asp-218 together coordinate N-[(5S)-5-amino-5-carboxypentanoyl]-L-cysteinyl-D-valine. The region spanning 182–290 is the Fe2OG dioxygenase domain; that stretch reads TLSSVVLIRY…RQSLPFFVNL (109 aa). Fe(2+) is bound by residues His-216, Asp-218, and His-272. 2-oxoglutarate is bound at residue Arg-281. Position 283 (Ser-283) interacts with isopenicillin N. Ser-283 contributes to the N-[(5S)-5-amino-5-carboxypentanoyl]-L-cysteinyl-D-valine binding site.

This sequence belongs to the iron/ascorbate-dependent oxidoreductase family. In terms of assembly, monomer. Fe(2+) is required as a cofactor.

It is found in the cytoplasm. Its subcellular location is the cytosol. The catalysed reaction is N-[(5S)-5-amino-5-carboxypentanoyl]-L-cysteinyl-D-valine + O2 = isopenicillin N + 2 H2O. Its pathway is antibiotic biosynthesis; penicillin G biosynthesis; penicillin G from L-alpha-aminoadipate and L-cysteine and L-valine: step 2/3. Its function is as follows. Isopenicillin N synthase; part of the gene cluster that mediates the biosynthesis of penicillin, the world's most important antibiotic. IpnA catalyzes the cyclization of the tripeptide N-[(5S)-5-amino-5-carboxypentanoyl]-L-cysteinyl-D-valine (LLD-ACV or ACV) to form isopenicillin N (IPN) that contains the beta-lactam nucleus. The penicillin biosynthesis occurs via 3 enzymatic steps, the first corresponding to the production of the tripeptide N-[(5S)-5-amino-5-carboxypentanoyl]-L-cysteinyl-D-valine (LLD-ACV or ACV) by the NRPS pcbAB. The tripeptide ACV is then cyclized to isopenicillin N (IPN) by the isopenicillin N synthase pcbC that forms the beta-lactam nucleus. Finally, the alpha-aminoadipyl side chain is exchanged for phenylacetic acid by the isopenicillin N acyltransferase penDE to yield penicillin in the peroxisomal matrix. This is Isopenicillin N synthase (PCBC) from Hapsidospora chrysogena (Acremonium chrysogenum).